The following is a 199-amino-acid chain: Recombination protein RecR (199 aa).

The C4-type zinc finger occupies 58-73; it reads CKTCGNIDTQSPCTVC. Residues 81–176 enclose the Toprim domain; that stretch reads AMIVVVADVA…KVTRLAHGVP (96 aa).

Belongs to the RecR family.

May play a role in DNA repair. It seems to be involved in an RecBC-independent recombinational process of DNA repair. It may act with RecF and RecO. In Bradyrhizobium sp. (strain BTAi1 / ATCC BAA-1182), this protein is Recombination protein RecR.